The primary structure comprises 976 residues: Vacuolar membrane protease (976 aa).

Residues 1–15 (MKLKSVFRSVLKYRK) lie on the Cytoplasmic side of the membrane. A helical transmembrane segment spans residues 16–36 (TNLSLLLLITYSIITLLYIFD). The Vacuolar portion of the chain corresponds to 37-359 (HERYKLNLPK…KFFVISAKTL (323 aa)). Residues Asn96 and Asn121 are each glycosylated (N-linked (GlcNAc...) asparagine). Zn(2+) is bound by residues His156 and Asp168. Asn189 carries N-linked (GlcNAc...) asparagine glycosylation. Catalysis depends on Glu200, which acts as the Proton acceptor. Position 201 (Glu201) interacts with Zn(2+). Asn212 and Asn217 each carry an N-linked (GlcNAc...) asparagine glycan. Residues Glu226 and His300 each coordinate Zn(2+). The chain crosses the membrane as a helical span at residues 360-380 (FYWNCIFLLVSPVVAIGLYLI). At 381–392 (SRDRMTWKSHSW) the chain is on the cytoplasmic side. A helical transmembrane segment spans residues 393 to 412 (LSWTRFPLSLAAGIIVQKLF). Residues 413 to 428 (SNDIIRSNPLTFSRNY) are Vacuolar-facing. Residues 429 to 449 (FWPISAFFTQVIFTSYVLINC) traverse the membrane as a helical segment. At 450–461 (SNFFFPCADMKS) the chain is on the cytoplasmic side. Residues 462–482 (LSIIELFIILWTILLFTSKLL) traverse the membrane as a helical segment. The Vacuolar portion of the chain corresponds to 483-496 (YSSDYRYTGLYPLS). Residues 497-517 (IFFLLSTIAAILRLLALALGM) traverse the membrane as a helical segment. Topologically, residues 518 to 627 (RTRKRLGREC…NSLKLEYTDY (110 aa)) are cytoplasmic. Residues 528 to 610 (RDHHSNYSSH…PLLKGSNSME (83 aa)) are disordered. A compositionally biased stretch (polar residues) spans 549–558 (NLEQPQDQFT). The segment covering 559–570 (SSQDDQASIQDD) has biased composition (low complexity). Basic and acidic residues predominate over residues 582–601 (NVDEDHGMDSSSQQHDERVP). A helical membrane pass occupies residues 628 to 648 (AWIIQFLLIVPIPSFILFNSV). Over 649-668 (DVIMDALNHTVQEGSKATFD) the chain is Vacuolar. N-linked (GlcNAc...) asparagine glycosylation is present at Asn656. Residues 669–689 (VLRFGMVGSILMALPILPFFY) form a helical membrane-spanning segment. At 690-692 (KVN) the chain is on the cytoplasmic side. A helical transmembrane segment spans residues 693–713 (YITISLTALLFLISASKTLLV). The Vacuolar portion of the chain corresponds to 714–976 (HPFTNSNPLK…LVIVKDAIIL (263 aa)). N-linked (GlcNAc...) asparagine glycans are attached at residues Asn768, Asn796, Asn811, Asn866, and Asn937.

Belongs to the peptidase M28 family. Zn(2+) serves as cofactor.

Its subcellular location is the vacuole membrane. Functionally, may be involved in vacuolar sorting and osmoregulation. This is Vacuolar membrane protease from Saccharomyces cerevisiae (strain RM11-1a) (Baker's yeast).